The following is a 455-amino-acid chain: MAAPSPSSPPNLLSPPPFRSPEASYFLRTCSNFSQLKQIHTKIIKHNLTNDQLLVRQLISVSSSFGETQYASLVFNQLQSPSTFTWNLMIRSLSVNHKPREALLLFILMMISHQSQFDKFTFPFVIKACLASSSIRLGTQVHGLAIKAGFFNDVFFQNTLMDLYFKCGKPDSGRKVFDKMPGRSIVSWTTMLYGLVSNSQLDSAEIVFNQMPMRNVVSWTAMITAYVKNRRPDEAFQLFRRMQVDDVKPNEFTIVNLLQASTQLGSLSMGRWVHDYAHKNGFVLDCFLGTALIDMYSKCGSLQDARKVFDVMQGKSLATWNSMITSLGVHGCGEEALSLFEEMEEEASVEPDAITFVGVLSACANTGNVKDGLRYFTRMIQVYGISPIREHNACMIQLLEQALEVEKASNLVESMDSDPDFNSSFGNEYTDGMNETNETPSQHQIMFTKWDTGRF.

The transit peptide at 1–19 directs the protein to the chloroplast; it reads MAAPSPSSPPNLLSPPPFR. PPR repeat units lie at residues 51–81, 82–117, 118–152, 153–187, 188–214, 215–249, 250–284, 285–315, 316–350, 352–387, and 388–418; these read DQLLVRQLISVSSSFGETQYASLVFNQLQSP, STFTWNLMIRSLSVNHKPREALLLFILMMISHQSQF, DKFTFPFVIKACLASSSIRLGTQVHGLAIKAGFFN, DVFFQNTLMDLYFKCGKPDSGRKVFDKMPGRSIVS, WTTMLYGLVSNSQLDSAEIVFNQMPMR, NVVSWTAMITAYVKNRRPDEAFQLFRRMQVDDVKP, NEFTIVNLLQASTQLGSLSMGRWVHDYAHKNGFVL, DCFLGTALIDMYSKCGSLQDARKVFDVMQGK, SLATWNSMITSLGVHGCGEEALSLFEEMEEEASVE, DAITFVGVLSACANTGNVKDGLRYFTRMIQVYGISP, and IREHNACMIQLLEQALEVEKASNLVESMDSD.

Belongs to the PPR family. PCMP-A subfamily.

The protein localises to the plastid. The protein resides in the chloroplast. The chain is Pentatricopeptide repeat-containing protein At3g26630, chloroplastic (PCMP-A6) from Arabidopsis thaliana (Mouse-ear cress).